The sequence spans 120 residues: NAD(P)H-quinone oxidoreductase subunit 3, chloroplastic (120 aa).

The next 3 membrane-spanning stretches (helical) occupy residues 9-29, 62-82, and 88-108; these read IFWAFLIISSLIPILAFFLSG, YYMFALVFVVFDVETVFLYPW, and VLGVSVFIEAFIFVLILIVGL.

Belongs to the complex I subunit 3 family. As to quaternary structure, NDH is composed of at least 16 different subunits, 5 of which are encoded in the nucleus.

It is found in the plastid. The protein resides in the chloroplast thylakoid membrane. The enzyme catalyses a plastoquinone + NADH + (n+1) H(+)(in) = a plastoquinol + NAD(+) + n H(+)(out). It catalyses the reaction a plastoquinone + NADPH + (n+1) H(+)(in) = a plastoquinol + NADP(+) + n H(+)(out). NDH shuttles electrons from NAD(P)H:plastoquinone, via FMN and iron-sulfur (Fe-S) centers, to quinones in the photosynthetic chain and possibly in a chloroplast respiratory chain. The immediate electron acceptor for the enzyme in this species is believed to be plastoquinone. Couples the redox reaction to proton translocation, and thus conserves the redox energy in a proton gradient. In Trachelium caeruleum (Blue throatwort), this protein is NAD(P)H-quinone oxidoreductase subunit 3, chloroplastic.